The chain runs to 194 residues: Leucyl/phenylalanyl-tRNA--protein transferase (194 aa).

It belongs to the L/F-transferase family.

It localises to the cytoplasm. It carries out the reaction N-terminal L-lysyl-[protein] + L-leucyl-tRNA(Leu) = N-terminal L-leucyl-L-lysyl-[protein] + tRNA(Leu) + H(+). The enzyme catalyses N-terminal L-arginyl-[protein] + L-leucyl-tRNA(Leu) = N-terminal L-leucyl-L-arginyl-[protein] + tRNA(Leu) + H(+). It catalyses the reaction L-phenylalanyl-tRNA(Phe) + an N-terminal L-alpha-aminoacyl-[protein] = an N-terminal L-phenylalanyl-L-alpha-aminoacyl-[protein] + tRNA(Phe). Its function is as follows. Functions in the N-end rule pathway of protein degradation where it conjugates Leu, Phe and, less efficiently, Met from aminoacyl-tRNAs to the N-termini of proteins containing an N-terminal arginine or lysine. This chain is Leucyl/phenylalanyl-tRNA--protein transferase, found in Chlorobaculum tepidum (strain ATCC 49652 / DSM 12025 / NBRC 103806 / TLS) (Chlorobium tepidum).